The sequence spans 449 residues: Glucose-6-phosphate isomerase 1 (449 aa).

Position 38 is a phosphothreonine (Thr38). Glu290 functions as the Proton donor in the catalytic mechanism. Residues His311 and Lys425 contribute to the active site.

The protein belongs to the GPI family. In terms of assembly, homodimer.

The protein localises to the cytoplasm. It catalyses the reaction alpha-D-glucose 6-phosphate = beta-D-fructose 6-phosphate. It functions in the pathway carbohydrate biosynthesis; gluconeogenesis. It participates in carbohydrate degradation; glycolysis; D-glyceraldehyde 3-phosphate and glycerone phosphate from D-glucose: step 2/4. In terms of biological role, catalyzes the reversible isomerization of glucose-6-phosphate to fructose-6-phosphate. This chain is Glucose-6-phosphate isomerase 1, found in Geobacillus stearothermophilus (Bacillus stearothermophilus).